A 917-amino-acid chain; its full sequence is Isoleucine--tRNA ligase (917 aa).

Residues Pro56, His67, Glu554, Gly555, Asp557, Gln558, and His585 each contribute to the L-isoleucyl-5'-AMP site. Residues 57-67 carry the 'HIGH' region motif; the sequence is PYANGNLHMGH. Residues 595–599 carry the 'KMSKS' region motif; it reads KMSKS. An ATP-binding site is contributed by Lys598. TRNA(Ile)-binding residues include Arg632 and Gln640. Zn(2+) contacts are provided by Cys886, Cys889, Cys906, and Cys909.

This sequence belongs to the class-I aminoacyl-tRNA synthetase family. IleS type 1 subfamily. Monomer. Zn(2+) is required as a cofactor.

The protein localises to the cytoplasm. It catalyses the reaction tRNA(Ile) + L-isoleucine + ATP = L-isoleucyl-tRNA(Ile) + AMP + diphosphate. Its function is as follows. Catalyzes the attachment of isoleucine to tRNA(Ile). As IleRS can inadvertently accommodate and process structurally similar amino acids such as valine, to avoid such errors it has two additional distinct tRNA(Ile)-dependent editing activities. One activity is designated as 'pretransfer' editing and involves the hydrolysis of activated Val-AMP. The other activity is designated 'posttransfer' editing and involves deacylation of mischarged Val-tRNA(Ile). The polypeptide is Isoleucine--tRNA ligase (ileS) (Staphylococcus aureus).